The chain runs to 590 residues: MRAQDLPPLPETPGVYLWKRGEEVLYVGKAKSLRARVKSYFHAEGKARRIAEEATGLDFIATRDEVEALLLEANLIKAHRPLYNVLLKDDKHYPFLKLTNEPFPTLLVVRRVEEDGAKYYGPFPEAGALRRIKTLIDRLFPLRKNSGYPMKRRRYPCLNYSMGRCLAPCVGKADPEAYQEVVRQVEAVLEGRVDGLLQELEAKMREAARRLEFERAAEIRDQMEALRAFFSTDQQAFDPEMGDLDFLGMARSGALAVVQLYQVRSGRILGRISRVVEKEEATDEEILWAFLRDHYLEASPLPPLVLLPFPLEDLESLAELLKRRAGRKVELRVPKKGEKARLLELAERNARLALETELKLRERRGEHPALKALQDLLGLPARPWRLEGYDISHLQGQARVFSIAVFEGGRPKRQEYRRMRLKAGNDDYAAMEEGVFRRYTGSLKDLPLPDLLLIDGGVGQVRAAARALERAGLRLPLVGLAKGEEVLVTPEGRELRLPLTHPALQLLIHLRDEAHQNGLRYHRKRRSEELFRVLQGIPGIGEKRRRLLLERYGGLRALKEAPLEELARLPGMSLEAARALKAALAEEEPA.

The region spanning 11–85 is the GIY-YIG domain; that stretch reads ETPGVYLWKR…IKAHRPLYNV (75 aa). The 36-residue stretch at 194–229 folds into the UVR domain; it reads DGLLQELEAKMREAARRLEFERAAEIRDQMEALRAF.

It belongs to the UvrC family. Interacts with UvrB in an incision complex.

The protein resides in the cytoplasm. Its function is as follows. The UvrABC repair system catalyzes the recognition and processing of DNA lesions. UvrC both incises the 5' and 3' sides of the lesion. The N-terminal half is responsible for the 3' incision and the C-terminal half is responsible for the 5' incision. The protein is UvrABC system protein C of Thermus thermophilus (strain ATCC 27634 / DSM 579 / HB8).